The following is a 292-amino-acid chain: Protease HtpX (292 aa).

The next 2 membrane-spanning stretches (helical) occupy residues 5–25 (IFLF…VMSV) and 34–54 (SGLL…SLLL). His-140 contacts Zn(2+). Glu-141 is an active-site residue. A Zn(2+)-binding site is contributed by His-144. The next 2 membrane-spanning stretches (helical) occupy residues 155 to 175 (LLQG…GGII) and 193 to 213 (IIVF…AMWF). Glu-218 provides a ligand contact to Zn(2+).

The protein belongs to the peptidase M48B family. It depends on Zn(2+) as a cofactor.

The protein resides in the cell inner membrane. The protein is Protease HtpX of Xanthomonas oryzae pv. oryzae (strain PXO99A).